The chain runs to 210 residues: N-(5'-phosphoribosyl)anthranilate isomerase (210 aa).

The protein belongs to the TrpF family.

It carries out the reaction N-(5-phospho-beta-D-ribosyl)anthranilate = 1-(2-carboxyphenylamino)-1-deoxy-D-ribulose 5-phosphate. It functions in the pathway amino-acid biosynthesis; L-tryptophan biosynthesis; L-tryptophan from chorismate: step 3/5. In Staphylococcus aureus (strain Mu3 / ATCC 700698), this protein is N-(5'-phosphoribosyl)anthranilate isomerase.